The chain runs to 258 residues: MEEDLMEYAPNIPDNVLELIFSFLKLQDLRNCTLVCKSWYRFFCDENNEVWRAQCLQKVPAEAFKNDLLTVVPTYKAKLRAYFHAWNPFDCSRHVYIKPNGFTLHRNPVAQSTDGSRGKIGFKHGRHAWEVRWEGPLGTVAVVGIATKDAAIQCHGYYALLGADDQSWGWNLVDNLLLHNGDAHGIYPLLNNAPKYKVGERIRVILDCDENTLSFEKNYEFLGVAFTDLPEKNFYPTVAAVYGNTEISMVYLGAPLDG.

In terms of domain architecture, F-box spans 6–54 (MEYAPNIPDNVLELIFSFLKLQDLRNCTLVCKSWYRFFCDENNEVWRAQ). A B30.2/SPRY domain is found at 64–256 (FKNDLLTVVP…ISMVYLGAPL (193 aa)).

The protein belongs to the FBXO45/Fsn family. As to quaternary structure, component of an E3 ubiquitin ligase complex composed of hiw and Fsn.

It localises to the synapse. Its pathway is protein modification; protein ubiquitination. Required in the presynaptic motoneuron to down-regulate the levels of wnd and restrain synaptic terminal growth at the neuromuscular junction (NMJ). In Anopheles gambiae (African malaria mosquito), this protein is F-box/SPRY domain-containing protein 1.